Consider the following 110-residue polypeptide: Iron-sulfur cluster assembly protein CyaY (110 aa).

It belongs to the frataxin family.

Functionally, involved in iron-sulfur (Fe-S) cluster assembly. May act as a regulator of Fe-S biogenesis. This Pseudomonas putida (strain GB-1) protein is Iron-sulfur cluster assembly protein CyaY.